A 221-amino-acid chain; its full sequence is 7-cyano-7-deazaguanine synthase (221 aa).

Residue 7-17 (LSGGMDSSTLA) participates in ATP binding. 4 residues coordinate Zn(2+): C187, C195, C198, and C201.

Belongs to the QueC family. Zn(2+) serves as cofactor.

The catalysed reaction is 7-carboxy-7-deazaguanine + NH4(+) + ATP = 7-cyano-7-deazaguanine + ADP + phosphate + H2O + H(+). It functions in the pathway purine metabolism; 7-cyano-7-deazaguanine biosynthesis. Catalyzes the ATP-dependent conversion of 7-carboxy-7-deazaguanine (CDG) to 7-cyano-7-deazaguanine (preQ(0)). This chain is 7-cyano-7-deazaguanine synthase, found in Methanosphaerula palustris (strain ATCC BAA-1556 / DSM 19958 / E1-9c).